The following is a 65-amino-acid chain: Large ribosomal subunit protein bL35 (65 aa).

A disordered region spans residues 1–22 (MPKIKTLRSAAKRFKKTASGKF). Basic residues predominate over residues 10 to 22 (AAKRFKKTASGKF).

It belongs to the bacterial ribosomal protein bL35 family.

This chain is Large ribosomal subunit protein bL35, found in Buchnera aphidicola subsp. Schizaphis graminum (strain Sg).